We begin with the raw amino-acid sequence, 303 residues long: Counting factor 50 (303 aa).

Residues 1–24 (MNKMNNIFLIISSIILSIVIFVSG) form the signal peptide. Positions 28-240 (IDFSSEISVG…CSTSSGSASG (213 aa)) constitute a Ch-type lysozyme domain. An N-linked (GlcNAc...) asparagine glycan is attached at N67. E125 is a catalytic residue. Residue N170 is glycosylated (N-linked (GlcNAc...) asparagine). The interval 226 to 303 (GSGSGCSTSS…GSGTGSGSSI (78 aa)) is S-G-S motif repeats. A compositionally biased stretch (low complexity) spans 236 to 292 (GSASGSASGSASGSASGSNSGSSNSGSSNSGSSNSGSNSGSSNSGSGNSGSSNSGSA). The disordered stretch occupies residues 236-303 (GSASGSASGS…GSGTGSGSSI (68 aa)). Over residues 293–303 (SGSGTGSGSSI) the composition is skewed to gly residues.

Belongs to the glycosyl hydrolase 25 family. In terms of assembly, monomer. Component of the counting factor (CF) complex, which includes cf60, cf50, cf45-1 and ctnA.

Its subcellular location is the secreted. The catalysed reaction is Hydrolysis of (1-&gt;4)-beta-linkages between N-acetylmuramic acid and N-acetyl-D-glucosamine residues in a peptidoglycan and between N-acetyl-D-glucosamine residues in chitodextrins.. Cell-counting factor that limits the maximum size of the multicellular structure during aggregation. Has a very low lysozyme activity. The polypeptide is Counting factor 50 (cf50-1) (Dictyostelium discoideum (Social amoeba)).